Here is a 203-residue protein sequence, read N- to C-terminus: Outer-membrane lipoprotein LolB (203 aa).

The first 17 residues, 1-17 (MNRLFRLLPLASLVLTA), serve as a signal peptide directing secretion. The N-palmitoyl cysteine moiety is linked to residue cysteine 18. A lipid anchor (S-diacylglycerol cysteine) is attached at cysteine 18.

The protein belongs to the LolB family. Monomer.

It localises to the cell outer membrane. Plays a critical role in the incorporation of lipoproteins in the outer membrane after they are released by the LolA protein. This chain is Outer-membrane lipoprotein LolB, found in Klebsiella pneumoniae (strain 342).